Consider the following 412-residue polypeptide: Imidazolonepropionase (412 aa).

Residues His71 and His73 each contribute to the Fe(3+) site. His71 and His73 together coordinate Zn(2+). 4-imidazolone-5-propanoate-binding residues include Arg80, Tyr143, and His176. Position 143 (Tyr143) interacts with N-formimidoyl-L-glutamate. His241 is a Fe(3+) binding site. His241 provides a ligand contact to Zn(2+). Gln244 provides a ligand contact to 4-imidazolone-5-propanoate. Fe(3+) is bound at residue Asp316. Zn(2+) is bound at residue Asp316. Positions 318 and 320 each coordinate N-formimidoyl-L-glutamate. Thr321 is a binding site for 4-imidazolone-5-propanoate.

This sequence belongs to the metallo-dependent hydrolases superfamily. HutI family. The cofactor is Zn(2+). It depends on Fe(3+) as a cofactor.

It is found in the cytoplasm. The catalysed reaction is 4-imidazolone-5-propanoate + H2O = N-formimidoyl-L-glutamate. It participates in amino-acid degradation; L-histidine degradation into L-glutamate; N-formimidoyl-L-glutamate from L-histidine: step 3/3. Its function is as follows. Catalyzes the hydrolytic cleavage of the carbon-nitrogen bond in imidazolone-5-propanoate to yield N-formimidoyl-L-glutamate. It is the third step in the universal histidine degradation pathway. In Aromatoleum aromaticum (strain DSM 19018 / LMG 30748 / EbN1) (Azoarcus sp. (strain EbN1)), this protein is Imidazolonepropionase.